The following is a 544-amino-acid chain: Chaperonin GroEL 1 (544 aa).

ATP contacts are provided by residues Thr-30–Pro-33, Lys-51, Asp-87–Thr-91, Gly-415, Asp-481–Leu-483, and Asp-497.

This sequence belongs to the chaperonin (HSP60) family. In terms of assembly, forms a cylinder of 14 subunits composed of two heptameric rings stacked back-to-back. Interacts with the co-chaperonin GroES.

It is found in the cytoplasm. The enzyme catalyses ATP + H2O + a folded polypeptide = ADP + phosphate + an unfolded polypeptide.. Its function is as follows. Together with its co-chaperonin GroES, plays an essential role in assisting protein folding. The GroEL-GroES system forms a nano-cage that allows encapsulation of the non-native substrate proteins and provides a physical environment optimized to promote and accelerate protein folding. In Chlamydia pneumoniae (Chlamydophila pneumoniae), this protein is Chaperonin GroEL 1.